A 337-amino-acid polypeptide reads, in one-letter code: Basic membrane protein A1 (337 aa).

Residues Met-1–Ser-17 form the signal peptide. Cys-18 carries the N-palmitoyl cysteine lipid modification. A lipid anchor (S-diacylglycerol cysteine) is attached at Cys-18.

It belongs to the BMP lipoprotein family. As to quaternary structure, monomer.

Its subcellular location is the cell inner membrane. Immunogenic protein. May be part of an ABC-type nucleoside uptake system involved in the purine salvage pathway. The polypeptide is Basic membrane protein A1 (bmpA1) (Borrelia garinii subsp. bavariensis (strain ATCC BAA-2496 / DSM 23469 / PBi) (Borreliella bavariensis)).